The sequence spans 396 residues: Gamma-D-glutamyl-L-diamino acid endopeptidase 1 (396 aa).

LysM domains are found at residues 1–45 (MDIL…RIQI) and 51–95 (TSYT…TIQV). Positions 108 to 394 (QNYDYSMMMN…EALGIFLAGL (287 aa)) constitute a Peptidase M14 domain. Zn(2+) contacts are provided by H162 and E165. D255 provides a ligand contact to substrate. H307 provides a ligand contact to Zn(2+). The active-site Proton donor is Y347. The Proton donor/acceptor role is filled by E366.

Belongs to the peptidase M14 family. Zn(2+) serves as cofactor.

It catalyses the reaction Hydrolysis of gamma-D-glutamyl bonds to the L-terminus (position 7) of meso-diaminopimelic acid (meso-A2pm) in 7-(L-Ala-gamma-D-Glu)-meso-A2pm and 7-(L-Ala-gamma-D-Glu)-7-(D-Ala)-meso-A2pm. It is required that the D-terminal amino and carboxy groups of meso-A2pm are unsubstituted.. Its function is as follows. An endopeptidase which hydrolyzes the gamma-D-Glu-(L)meso-diaminopimelic acid bond of L-Ala-gamma-D-Glu-(L)meso-diaminopimelic acid and L-Ala-gamma-D-Glu-(L)meso-diaminopimelic acid(L)-D-Ala peptides. It is active on spore cortex peptidoglycan. The sequence is that of Gamma-D-glutamyl-L-diamino acid endopeptidase 1 from Lysinibacillus sphaericus (Bacillus sphaericus).